The following is a 425-amino-acid chain: Serine hydroxymethyltransferase 2 (425 aa).

Residues Leu-121 and 125 to 127 contribute to the (6S)-5,6,7,8-tetrahydrofolate site; that span reads GHL. Residue Lys-230 is modified to N6-(pyridoxal phosphate)lysine.

The protein belongs to the SHMT family. In terms of assembly, homodimer. Requires pyridoxal 5'-phosphate as cofactor.

The protein resides in the cytoplasm. The enzyme catalyses (6R)-5,10-methylene-5,6,7,8-tetrahydrofolate + glycine + H2O = (6S)-5,6,7,8-tetrahydrofolate + L-serine. It participates in one-carbon metabolism; tetrahydrofolate interconversion. The protein operates within amino-acid biosynthesis; glycine biosynthesis; glycine from L-serine: step 1/1. Functionally, catalyzes the reversible interconversion of serine and glycine with tetrahydrofolate (THF) serving as the one-carbon carrier. This reaction serves as the major source of one-carbon groups required for the biosynthesis of purines, thymidylate, methionine, and other important biomolecules. Also exhibits THF-independent aldolase activity toward beta-hydroxyamino acids, producing glycine and aldehydes, via a retro-aldol mechanism. The chain is Serine hydroxymethyltransferase 2 from Mycobacterium tuberculosis (strain CDC 1551 / Oshkosh).